We begin with the raw amino-acid sequence, 314 residues long: tRNA dimethylallyltransferase 2 (314 aa).

Residue 8-15 (GPTGTGKS) participates in ATP binding. 10–15 (TGTGKS) is a substrate binding site.

Belongs to the IPP transferase family. In terms of assembly, monomer. Requires Mg(2+) as cofactor.

It catalyses the reaction adenosine(37) in tRNA + dimethylallyl diphosphate = N(6)-dimethylallyladenosine(37) in tRNA + diphosphate. Catalyzes the transfer of a dimethylallyl group onto the adenine at position 37 in tRNAs that read codons beginning with uridine, leading to the formation of N6-(dimethylallyl)adenosine (i(6)A). The polypeptide is tRNA dimethylallyltransferase 2 (Mycobacterium ulcerans (strain Agy99)).